Here is a 616-residue protein sequence, read N- to C-terminus: Probable galacturonosyltransferase 4 (616 aa).

The Cytoplasmic portion of the chain corresponds to 1–6 (MMVKLR). A helical; Signal-anchor for type II membrane protein membrane pass occupies residues 7–29 (NLVLFFMLLTVVAHILLYTDPAA). Over 30–616 (SFKTPFSKRD…VYLRECNINP (587 aa)) the chain is Lumenal. A disordered region spans residues 132–152 (QTSEKVDEQPEPNAFGAKKDT). 5 N-linked (GlcNAc...) asparagine glycosylation sites follow: Asn291, Asn326, Asn378, Asn481, and Asn514.

Belongs to the glycosyltransferase 8 family. Expressed in roots, inflorescences, siliques, leaves and stems.

The protein localises to the golgi apparatus membrane. Its pathway is glycan metabolism; pectin biosynthesis. Its function is as follows. May be involved in pectin and/or xylans biosynthesis in cell walls. The chain is Probable galacturonosyltransferase 4 (GAUT4) from Arabidopsis thaliana (Mouse-ear cress).